The following is a 256-amino-acid chain: 3-dehydroquinate dehydratase (256 aa).

Residues Ser-19, Glu-38 to Arg-40, and Arg-68 each bind 3-dehydroquinate. His-122 serves as the catalytic Proton donor/acceptor. The Schiff-base intermediate with substrate role is filled by Lys-147. Positions 185, 204, and 208 each coordinate 3-dehydroquinate.

This sequence belongs to the type-I 3-dehydroquinase family. In terms of assembly, homodimer.

The enzyme catalyses 3-dehydroquinate = 3-dehydroshikimate + H2O. It participates in metabolic intermediate biosynthesis; chorismate biosynthesis; chorismate from D-erythrose 4-phosphate and phosphoenolpyruvate: step 3/7. Involved in the third step of the chorismate pathway, which leads to the biosynthesis of aromatic amino acids. Catalyzes the cis-dehydration of 3-dehydroquinate (DHQ) and introduces the first double bond of the aromatic ring to yield 3-dehydroshikimate. The chain is 3-dehydroquinate dehydratase from Methanospirillum hungatei JF-1 (strain ATCC 27890 / DSM 864 / NBRC 100397 / JF-1).